The following is a 336-amino-acid chain: MIRVGIVGASGYVGLELTRILLKHPEVEKLYLFSDHFEDSWIFESEKIFVSDRSSYTELYKNLDVVFFALGSGETLKFLNDNQIPERFIDMSADFRFKNPGEYERVYGIKHSMPELLEKVVYGLPEVFREKIRDAKYIANPGCYPTASLLGLFPLIKNNLTYGNAIIDAKSGISGAGRKPTDKSIYGNIAENYQAYSILNHRHQPEIENIVKEMGYLRVLFIPQLIPVFRGIFASIYVPLREDITSDELYLLFKEVYKDEYFIKILPPSCSPEIKKVRGTNWAVISAQVDKNTRNAVIFVAIDNLIKGAAGQAVQNMNIMFGYDENLGLDFLPLYP.

Cys-143 is a catalytic residue.

The protein belongs to the NAGSA dehydrogenase family. Type 1 subfamily.

The protein resides in the cytoplasm. The enzyme catalyses N-acetyl-L-glutamate 5-semialdehyde + phosphate + NADP(+) = N-acetyl-L-glutamyl 5-phosphate + NADPH + H(+). It functions in the pathway amino-acid biosynthesis; L-arginine biosynthesis; N(2)-acetyl-L-ornithine from L-glutamate: step 3/4. Functionally, catalyzes the NADPH-dependent reduction of N-acetyl-5-glutamyl phosphate to yield N-acetyl-L-glutamate 5-semialdehyde. In Dictyoglomus thermophilum (strain ATCC 35947 / DSM 3960 / H-6-12), this protein is N-acetyl-gamma-glutamyl-phosphate reductase.